We begin with the raw amino-acid sequence, 483 residues long: Deoxyribodipyrimidine photo-lyase (483 aa).

The Photolyase/cryptochrome alpha/beta domain maps to Gln2–Leu136. (6R)-5,10-methylene-5,6,7,8-tetrahydrofolate-binding residues include Asn109 and Glu110. An FAD-binding site is contributed by Tyr225. Arg229 lines the DNA pocket. Residue Thr237–Ser241 participates in FAD binding. 2 interaction with DNA regions span residues Gln278–Tyr285 and Asn345–Arg346. Residue Asp376–Asp378 participates in FAD binding. Residue Gln408 participates in DNA binding.

Belongs to the DNA photolyase class-1 family. As to quaternary structure, monomer. FAD is required as a cofactor. The cofactor is (6R)-5,10-methylene-5,6,7,8-tetrahydrofolate.

The enzyme catalyses cyclobutadipyrimidine (in DNA) = 2 pyrimidine residues (in DNA).. Functionally, involved in repair of UV radiation-induced DNA damage. Catalyzes the light-dependent monomerization (300-600 nm) of cyclobutyl pyrimidine dimers (in cis-syn configuration), which are formed between adjacent bases on the same DNA strand upon exposure to ultraviolet radiation. The sequence is that of Deoxyribodipyrimidine photo-lyase (phrB) from Buchnera aphidicola subsp. Acyrthosiphon pisum (strain APS) (Acyrthosiphon pisum symbiotic bacterium).